The following is a 1052-amino-acid chain: Protein HelA (1052 aa).

Helical transmembrane passes span 14–34 (WFVL…FQRL), 121–141 (LPPG…EIFM), 348–368 (GALL…AALI), 369–389 (TAMV…ENQI), 393–413 (LMSL…IIVE), 450–470 (SIFG…LTGV), 483–503 (IIAL…AVAI), 537–557 (VVIS…FHLG), 878–898 (LQIV…ISFG), 903–923 (ALLV…ALWL), 934–954 (VGFI…ITFI), 979–999 (PVLM…LATG), and 1011–1031 (VVIG…PGLY).

This sequence belongs to the resistance-nodulation-cell division (RND) (TC 2.A.6) family.

The protein localises to the cell inner membrane. Presumed to function with HelC and HelB in efflux of an unidentified substrate. The sequence is that of Protein HelA (helA) from Legionella pneumophila.